The chain runs to 268 residues: NH(3)-dependent NAD(+) synthetase (268 aa).

Residue 46 to 53 coordinates ATP; sequence GVSGGQDS. Asp-52 is a Mg(2+) binding site. Arg-140 lines the deamido-NAD(+) pocket. Residue Thr-160 coordinates ATP. Glu-165 provides a ligand contact to Mg(2+). The deamido-NAD(+) site is built by Lys-173 and Asp-180. Lys-189 lines the ATP pocket. Position 260–261 (260–261) interacts with deamido-NAD(+); sequence HK.

It belongs to the NAD synthetase family. As to quaternary structure, homodimer.

It carries out the reaction deamido-NAD(+) + NH4(+) + ATP = AMP + diphosphate + NAD(+) + H(+). It functions in the pathway cofactor biosynthesis; NAD(+) biosynthesis; NAD(+) from deamido-NAD(+) (ammonia route): step 1/1. Its function is as follows. Catalyzes the ATP-dependent amidation of deamido-NAD to form NAD. Uses ammonia as a nitrogen source. The polypeptide is NH(3)-dependent NAD(+) synthetase (Buchnera aphidicola subsp. Acyrthosiphon pisum (strain APS) (Acyrthosiphon pisum symbiotic bacterium)).